Here is a 196-residue protein sequence, read N- to C-terminus: Probable peptidyl-prolyl cis-trans isomerase (196 aa).

Positions 1-26 are cleaved as a signal peptide; that stretch reads MSFIRSALAAAAFVALSIGAVQTASA. A PPIase cyclophilin-type domain is found at 29–194; the sequence is PENTVILKLK…KIIKATIEAD (166 aa).

Belongs to the cyclophilin-type PPIase family.

It localises to the periplasm. The enzyme catalyses [protein]-peptidylproline (omega=180) = [protein]-peptidylproline (omega=0). In terms of biological role, PPIases accelerate the folding of proteins. It catalyzes the cis-trans isomerization of proline imidic peptide bonds in oligopeptides. This is Probable peptidyl-prolyl cis-trans isomerase (ppi) from Brucella abortus (strain 2308).